We begin with the raw amino-acid sequence, 259 residues long: uncharacterized protein (259 aa).

The 245-residue stretch at 4–248 folds into the ABC transporter domain; that stretch reads LQTTNLSKTY…SILDTLSVLG (245 aa). 42–49 contributes to the ATP binding site; that stretch reads GPSGSGKT.

The protein belongs to the ABC transporter superfamily.

This is an uncharacterized protein from Bacillus subtilis (strain 168).